The chain runs to 573 residues: Putative ATP-dependent RNA helicase R563 (573 aa).

A Helicase ATP-binding domain is found at 57 to 233 (INPKTPYKGL…ALTMNLLVRN (177 aa)). 70–77 (HRIGAGKT) is an ATP binding site. A DEAH box motif is present at residues 179–182 (DEVH). The Helicase C-terminal domain occupies 374-551 (KILRKIKRCN…AFEKALKEAA (178 aa)).

The protein belongs to the DEAD box helicase family. DEAH subfamily.

Its subcellular location is the virion. It carries out the reaction ATP + H2O = ADP + phosphate + H(+). This Acanthamoeba polyphaga mimivirus (APMV) protein is Putative ATP-dependent RNA helicase R563.